Reading from the N-terminus, the 220-residue chain is Type IV major pilin protein PilA (220 aa).

A propeptide spans 1-12 (MRVSRFNPRNRG) (leader sequence). N-methylphenylalanine is present on Phe13. A helical transmembrane segment spans residues 13 to 33 (FTLIELMIVVAIIGILAAIAI).

This sequence belongs to the N-Me-Phe pilin family.

The protein localises to the fimbrium. It is found in the membrane. Its activity is regulated as follows. The two-component PilS2/PilR2 is required for proper assembly of T4P and regulation. Functionally, major component of the type IV pili that are required for social gliding motility through cycles of extension and retraction. Extended pili are composed of thousands of copies of PilA and retract upon binding to extracellular polysaccharides and thereby pull the cell forward. This Myxococcus xanthus (strain DK1622) protein is Type IV major pilin protein PilA (pilA).